A 187-amino-acid polypeptide reads, in one-letter code: Elongation factor P (187 aa).

Belongs to the elongation factor P family.

The protein resides in the cytoplasm. It participates in protein biosynthesis; polypeptide chain elongation. In terms of biological role, involved in peptide bond synthesis. Stimulates efficient translation and peptide-bond synthesis on native or reconstituted 70S ribosomes in vitro. Probably functions indirectly by altering the affinity of the ribosome for aminoacyl-tRNA, thus increasing their reactivity as acceptors for peptidyl transferase. This Corynebacterium urealyticum (strain ATCC 43042 / DSM 7109) protein is Elongation factor P.